The following is a 142-amino-acid chain: Hemoglobin subunit alpha (142 aa).

Positions 1–142 constitute a Globin domain; the sequence is GLTAADKTLI…VEKALFETYR (142 aa). Residue H59 coordinates O2. Residue H88 participates in heme b binding.

This sequence belongs to the globin family. In terms of assembly, heterotetramer of two alpha chains and two beta chains (an easy dimerization is also reported). In terms of tissue distribution, red blood cells.

Its function is as follows. Involved in oxygen transport from the lung to the various peripheral tissues. This is Hemoglobin subunit alpha (HBA) from Latimeria chalumnae (Coelacanth).